Here is a 167-residue protein sequence, read N- to C-terminus: Bacterial non-heme ferritin-like protein (167 aa).

Positions 1-145 (MATAGMLLKL…TILDEVRSAK (145 aa)) constitute a Ferritin-like diiron domain.

It belongs to the ferritin family. Prokaryotic subfamily.

It localises to the cytoplasm. This chain is Bacterial non-heme ferritin-like protein (ftnB), found in Escherichia coli O157:H7.